The following is a 93-amino-acid chain: MLCSIYKSSKKEGTYLYIPKKDDFSQVPDTLMQMFGKPSHVMTVNLEGRSLALVNIEKVKESLSNEGFFLQLPPPPENLLQQHKERKAQQKND.

Residues 1-84 (MLCSIYKSSK…PPENLLQQHK (84 aa)) enclose the YcgL domain. Residues 74–93 (PPPENLLQQHKERKAQQKND) are disordered.

The sequence is that of YcgL domain-containing protein VV1058 from Vibrio vulnificus (strain YJ016).